The chain runs to 395 residues: Elongation factor Tu (395 aa).

A tr-type G domain is found at 10-204 (KPHVNIGTIG…EVDAYIPTPE (195 aa)). Positions 19 to 26 (GHVDHGKT) are G1. GTP is bound at residue 19–26 (GHVDHGKT). Residue Thr-26 coordinates Mg(2+). The tract at residues 60–64 (GITIS) is G2. Residues 81-84 (DCPG) are G3. Residues 81–85 (DCPGH) and 136–139 (NKCD) each bind GTP. Residues 136 to 139 (NKCD) are G4. The interval 174-176 (SAL) is G5.

It belongs to the TRAFAC class translation factor GTPase superfamily. Classic translation factor GTPase family. EF-Tu/EF-1A subfamily. In terms of assembly, monomer.

The protein localises to the cytoplasm. The enzyme catalyses GTP + H2O = GDP + phosphate + H(+). GTP hydrolase that promotes the GTP-dependent binding of aminoacyl-tRNA to the A-site of ribosomes during protein biosynthesis. The protein is Elongation factor Tu of Bacillus cereus (strain G9842).